Consider the following 671-residue polypeptide: DNA ligase (671 aa).

NAD(+) is bound by residues 36-40 (DHVYD), 85-86 (SM), and Glu-115. Lys-117 serves as the catalytic N6-AMP-lysine intermediate. Positions 138, 172, 287, and 311 each coordinate NAD(+). Residues Cys-405, Cys-408, Cys-423, and Cys-428 each contribute to the Zn(2+) site. Residues 588–671 (AADNFFKGKT…SKIEEKDTEK (84 aa)) enclose the BRCT domain.

It belongs to the NAD-dependent DNA ligase family. LigA subfamily. Mg(2+) is required as a cofactor. Mn(2+) serves as cofactor.

It carries out the reaction NAD(+) + (deoxyribonucleotide)n-3'-hydroxyl + 5'-phospho-(deoxyribonucleotide)m = (deoxyribonucleotide)n+m + AMP + beta-nicotinamide D-nucleotide.. Its function is as follows. DNA ligase that catalyzes the formation of phosphodiester linkages between 5'-phosphoryl and 3'-hydroxyl groups in double-stranded DNA using NAD as a coenzyme and as the energy source for the reaction. It is essential for DNA replication and repair of damaged DNA. The sequence is that of DNA ligase from Lactobacillus delbrueckii subsp. bulgaricus (strain ATCC 11842 / DSM 20081 / BCRC 10696 / JCM 1002 / NBRC 13953 / NCIMB 11778 / NCTC 12712 / WDCM 00102 / Lb 14).